Reading from the N-terminus, the 545-residue chain is Chaperonin GroEL (545 aa).

ATP contacts are provided by residues 29-32, Lys-50, 86-90, Gly-414, 480-482, and Asp-496; these read TMGP, DGTTT, and NAA.

It belongs to the chaperonin (HSP60) family. In terms of assembly, forms a cylinder of 14 subunits composed of two heptameric rings stacked back-to-back. Interacts with the co-chaperonin GroES.

The protein localises to the cytoplasm. It carries out the reaction ATP + H2O + a folded polypeptide = ADP + phosphate + an unfolded polypeptide.. Functionally, together with its co-chaperonin GroES, plays an essential role in assisting protein folding. The GroEL-GroES system forms a nano-cage that allows encapsulation of the non-native substrate proteins and provides a physical environment optimized to promote and accelerate protein folding. The sequence is that of Chaperonin GroEL from Malacoplasma penetrans (strain HF-2) (Mycoplasma penetrans).